We begin with the raw amino-acid sequence, 158 residues long: NAD(P)H-quinone oxidoreductase subunit J, chloroplastic (158 aa).

Belongs to the complex I 30 kDa subunit family. In terms of assembly, NDH is composed of at least 16 different subunits, 5 of which are encoded in the nucleus.

Its subcellular location is the plastid. It is found in the chloroplast thylakoid membrane. The catalysed reaction is a plastoquinone + NADH + (n+1) H(+)(in) = a plastoquinol + NAD(+) + n H(+)(out). It carries out the reaction a plastoquinone + NADPH + (n+1) H(+)(in) = a plastoquinol + NADP(+) + n H(+)(out). Functionally, NDH shuttles electrons from NAD(P)H:plastoquinone, via FMN and iron-sulfur (Fe-S) centers, to quinones in the photosynthetic chain and possibly in a chloroplast respiratory chain. The immediate electron acceptor for the enzyme in this species is believed to be plastoquinone. Couples the redox reaction to proton translocation, and thus conserves the redox energy in a proton gradient. The polypeptide is NAD(P)H-quinone oxidoreductase subunit J, chloroplastic (Pelargonium hortorum (Common geranium)).